A 439-amino-acid chain; its full sequence is GTPase Der (439 aa).

EngA-type G domains are found at residues 4–168 and 177–352; these read PIVA…KDDE and INIA…DNYT. GTP is bound by residues 10–17, 57–61, 120–123, 183–190, 230–234, and 295–298; these read GRPNVGKS, DTGGI, NKID, GKPNVGKS, DTAGL, and NKWD. A KH-like domain is found at 353 to 437; that stretch reads KRVKTGVLND…GIKLEFRERK (85 aa).

This sequence belongs to the TRAFAC class TrmE-Era-EngA-EngB-Septin-like GTPase superfamily. EngA (Der) GTPase family. In terms of assembly, associates with the 50S ribosomal subunit.

In terms of biological role, GTPase that plays an essential role in the late steps of ribosome biogenesis. The protein is GTPase Der of Clostridium botulinum (strain Langeland / NCTC 10281 / Type F).